The following is a 135-amino-acid chain: MTRSTSSAPSQRMLRVGEQVRAAITQVLQRGEVRDPLIEKTVISISEVRMSPDLKIATAYVTPLGVADHAAVIEALNKHAKFIRGRLGPQLRQMKYMPDVRFRDDTSFDNYQKIDALLRSPEVSRDLDPDTDDQE.

The protein belongs to the RbfA family. As to quaternary structure, monomer. Binds 30S ribosomal subunits, but not 50S ribosomal subunits or 70S ribosomes.

It is found in the cytoplasm. In terms of biological role, one of several proteins that assist in the late maturation steps of the functional core of the 30S ribosomal subunit. Associates with free 30S ribosomal subunits (but not with 30S subunits that are part of 70S ribosomes or polysomes). Required for efficient processing of 16S rRNA. May interact with the 5'-terminal helix region of 16S rRNA. The chain is Ribosome-binding factor A from Sinorhizobium fredii (strain NBRC 101917 / NGR234).